Reading from the N-terminus, the 1944-residue chain is uncharacterized protein (1944 aa).

The tract at residues 908-999 is disordered; that stretch reads SQNLNFLKSK…SESEEESSNG (92 aa). Basic and acidic residues-rich tracts occupy residues 916 to 929 and 939 to 949; these read SKQE…ESAK and LSEKLNSDNHI. Acidic residues predominate over residues 985 to 996; the sequence is SDEDTSESEEES. 1293 to 1300 is a binding site for ATP; sequence GPPGTGKT. The interval 1824 to 1944 is disordered; sequence QEAHKVKKRH…PPKVEHFKRK (121 aa). Composition is skewed to basic and acidic residues over residues 1843–1852 and 1869–1891; these read GTERDEDIPN and KVTK…KIDE. Residues 1912–1922 show a composition bias toward basic residues; the sequence is GHMKKSKKPKS.

It belongs to the DNA2/NAM7 helicase family.

The protein resides in the nucleus. This is an uncharacterized protein from Schizosaccharomyces pombe (strain 972 / ATCC 24843) (Fission yeast).